The following is a 162-amino-acid chain: Cytochrome c-type biogenesis protein CcmE (162 aa).

The Cytoplasmic portion of the chain corresponds to 1–8 (MNPVRKKR). Residues 9 to 29 (LIIVLAIVAGVGAAVGLALSA) form a helical; Signal-anchor for type II membrane protein membrane-spanning segment. The Periplasmic segment spans residues 30–162 (LQQNINLFYT…GETSYNQEGK (133 aa)). 2 residues coordinate heme: His124 and Tyr128. The segment covering 139–148 (DSGQLKHYEN) has biased composition (basic and acidic residues). The interval 139-162 (DSGQLKHYENGKAAGETSYNQEGK) is disordered.

This sequence belongs to the CcmE/CycJ family.

It is found in the cell inner membrane. Functionally, heme chaperone required for the biogenesis of c-type cytochromes. Transiently binds heme delivered by CcmC and transfers the heme to apo-cytochromes in a process facilitated by CcmF and CcmH. The polypeptide is Cytochrome c-type biogenesis protein CcmE (Pseudomonas aeruginosa (strain ATCC 15692 / DSM 22644 / CIP 104116 / JCM 14847 / LMG 12228 / 1C / PRS 101 / PAO1)).